The following is a 334-amino-acid chain: Nucleoid-associated protein plu2870 (334 aa).

Belongs to the YejK family.

It localises to the cytoplasm. The protein localises to the nucleoid. The chain is Nucleoid-associated protein plu2870 from Photorhabdus laumondii subsp. laumondii (strain DSM 15139 / CIP 105565 / TT01) (Photorhabdus luminescens subsp. laumondii).